We begin with the raw amino-acid sequence, 303 residues long: Terpene synthase (303 aa).

Residues aspartate 69 and aspartate 73 each coordinate Mg(2+). Positions 69–73 (DDIQD) match the DDXXD motif motif.

The protein belongs to the FPP/GGPP synthase family. Requires Mg(2+) as cofactor.

It carries out the reaction (2E)-geranyl diphosphate + H2O = (2E)-geraniol + diphosphate. In terms of biological role, terpene synthase that is able to convert geraniol diphosphate to geraniol in tea leaves. The sequence is that of Terpene synthase from Matsumurasca onukii (Tea green leafhopper).